We begin with the raw amino-acid sequence, 289 residues long: Diaminopimelate epimerase (289 aa).

Residues Asn13, Gln47, and Asn67 each contribute to the substrate site. The active-site Proton donor is the Cys76. Residues 77-78, Asn167, Asn200, and 218-219 each bind substrate; these read GN and ER. Cys227 functions as the Proton acceptor in the catalytic mechanism. Residue 228-229 participates in substrate binding; sequence GT.

The protein belongs to the diaminopimelate epimerase family. Homodimer.

It localises to the cytoplasm. It carries out the reaction (2S,6S)-2,6-diaminopimelate = meso-2,6-diaminopimelate. Its pathway is amino-acid biosynthesis; L-lysine biosynthesis via DAP pathway; DL-2,6-diaminopimelate from LL-2,6-diaminopimelate: step 1/1. In terms of biological role, catalyzes the stereoinversion of LL-2,6-diaminopimelate (L,L-DAP) to meso-diaminopimelate (meso-DAP), a precursor of L-lysine and an essential component of the bacterial peptidoglycan. This is Diaminopimelate epimerase from Burkholderia pseudomallei (strain 668).